The primary structure comprises 136 residues: Signal recognition particle 14 kDa protein (136 aa).

Phosphotyrosine is present on Tyr27. The segment at 116–136 (APAAAATAPTTAATTAATAAQ) is disordered.

This sequence belongs to the SRP14 family. In terms of assembly, heterodimer with SRP9; binds RNA as heterodimer. Component of a signal recognition particle (SRP) complex that consists of a 7SL RNA molecule of 300 nucleotides and six protein subunits: SRP72, SRP68, SRP54, SRP19, SRP14 and SRP9.

The protein resides in the cytoplasm. Its function is as follows. Component of the signal recognition particle (SRP) complex, a ribonucleoprotein complex that mediates the cotranslational targeting of secretory and membrane proteins to the endoplasmic reticulum (ER). SRP9 together with SRP14 and the Alu portion of the SRP RNA, constitutes the elongation arrest domain of SRP. The complex of SRP9 and SRP14 is required for SRP RNA binding. This Homo sapiens (Human) protein is Signal recognition particle 14 kDa protein (SRP14).